A 311-amino-acid polypeptide reads, in one-letter code: Urease accessory protein UreD (311 aa).

It belongs to the UreD family. In terms of assembly, ureD, UreF and UreG form a complex that acts as a GTP-hydrolysis-dependent molecular chaperone, activating the urease apoprotein by helping to assemble the nickel containing metallocenter of UreC. The UreE protein probably delivers the nickel.

The protein resides in the cytoplasm. In terms of biological role, required for maturation of urease via the functional incorporation of the urease nickel metallocenter. This Synechococcus sp. (strain CC9605) protein is Urease accessory protein UreD.